We begin with the raw amino-acid sequence, 229 residues long: NAD(P)H-hydrate epimerase (229 aa).

The region spanning 10–217 is the YjeF N-terminal domain; the sequence is AINVDLELFN…ALQRKYELNL (208 aa). 60–64 provides a ligand contact to (6S)-NADPHX; sequence NNGGD. Residues asparagine 61 and aspartate 125 each coordinate K(+). (6S)-NADPHX-binding positions include 129-135 and aspartate 158; that span reads GFSFKPP. Serine 161 provides a ligand contact to K(+).

Belongs to the NnrE/AIBP family. The cofactor is K(+).

The catalysed reaction is (6R)-NADHX = (6S)-NADHX. It carries out the reaction (6R)-NADPHX = (6S)-NADPHX. Its function is as follows. Catalyzes the epimerization of the S- and R-forms of NAD(P)HX, a damaged form of NAD(P)H that is a result of enzymatic or heat-dependent hydration. This is a prerequisite for the S-specific NAD(P)H-hydrate dehydratase to allow the repair of both epimers of NAD(P)HX. This chain is NAD(P)H-hydrate epimerase, found in Drosophila mojavensis (Fruit fly).